The sequence spans 480 residues: M-phase inducer phosphatase cdc-25.2 (480 aa).

The segment covering 1-20 has biased composition (polar residues); the sequence is MNRPSQISQDVAQPLSNQHE. Positions 1 to 35 are disordered; sequence MNRPSQISQDVAQPLSNQHETAMMSSDEDSMSRDS. The 107-residue stretch at 243-349 folds into the Rhodanese domain; sequence FDDKYILIDC…FFFAANEANI (107 aa). The disordered stretch occupies residues 411–452; sequence TSAPSTSTENIDTNDDCQKSRTPAVPRIASRRNLFSDPSHSP.

The protein belongs to the MPI phosphatase family.

It catalyses the reaction O-phospho-L-tyrosyl-[protein] + H2O = L-tyrosyl-[protein] + phosphate. Functionally, required for intestinal cell division following the 16E cell stage of embryogenesis. Regulates intestinal cell divisions and binucleations probably by modulating the activity of the cell cycle regulator wee-1.3 and by activating the cdk-1/cyb-1 complex. Plays a role in male tail development, via regulation of the cell divisions of the ray precursor cell lineages, perhaps acting together with cell cycle regulators cyl-1, cdk-1, cyb-3, and cyd-1. This is M-phase inducer phosphatase cdc-25.2 from Caenorhabditis elegans.